The primary structure comprises 673 residues: RAS guanyl-releasing protein 4 (673 aa).

Composition is skewed to basic residues over residues 1–10 (MNRKDSKRKS) and 20–32 (GRGR…RHKT). Disordered regions lie at residues 1-34 (MNRK…KTCP) and 162-188 (QSLG…PGLG). The N-terminal Ras-GEF domain occupies 49–172 (GMLNEGGCSE…SLGDFSSRLS (124 aa)). Residues 201–432 (ETGELAEHLT…YELSYAREPR (232 aa)) enclose the Ras-GEF domain. The region spanning 466–501 (HVEQLVESVFKNYDPDGRGTISQEDFERLSGNFPFA) is the EF-hand domain. The Phorbol-ester/DAG-type zinc-finger motif lies at 540-590 (LHTFQEVTFRKPTFCNSCSGFLWGVTKQGYRCRDCGLCCHRHCRDQVKVEC). Disordered regions lie at residues 593–618 (RPGA…ASCG) and 638–673 (RHAW…KLNS). Positions 603–612 (PEAPVPPTPV) are enriched in pro residues.

It belongs to the RASGRP family.

It is found in the cytoplasm. The protein resides in the cell membrane. Its function is as follows. Functions as a cation- and diacylglycerol (DAG)-regulated nucleotide exchange factor activating Ras through the exchange of bound GDP for GTP. In neutrophils, participates in a phospholipase C-activating N-formyl peptide-activated GPCR (G protein-coupled receptor) signaling pathway by promoting Ras-mediated activation of PIK3CG/PI3Kgamma to promote neutrophil functional responses. In CD117(+) dendritic cells and mast cells, participates in an lipopolysaccharide (LPS)-activated signaling pathway that stimulates the production of interferon-gamma and other pro-inflammatory cytokines by natural killer (NK) cells. May function in mast cell differentiation. Does not appear to be required for the development of B-cells, DC-cells, T-cells, or NK-cells. This Bos taurus (Bovine) protein is RAS guanyl-releasing protein 4 (RASGRP4).